Here is a 129-residue protein sequence, read N- to C-terminus: L-ectoine synthase (129 aa).

It belongs to the ectoine synthase family.

It catalyses the reaction (2S)-4-acetamido-2-aminobutanoate = L-ectoine + H2O. It participates in amine and polyamine biosynthesis; ectoine biosynthesis; L-ectoine from L-aspartate 4-semialdehyde: step 3/3. Catalyzes the circularization of gamma-N-acetyl-alpha,gamma-diaminobutyric acid (ADABA) to ectoine (1,4,5,6-tetrahydro-2-methyl-4-pyrimidine carboxylic acid), which is an excellent osmoprotectant. The sequence is that of L-ectoine synthase from Marinomonas sp. (strain MWYL1).